Here is an 88-residue protein sequence, read N- to C-terminus: Small ribosomal subunit protein uS17 (88 aa).

The protein belongs to the universal ribosomal protein uS17 family. In terms of assembly, part of the 30S ribosomal subunit.

Functionally, one of the primary rRNA binding proteins, it binds specifically to the 5'-end of 16S ribosomal RNA. The polypeptide is Small ribosomal subunit protein uS17 (Hahella chejuensis (strain KCTC 2396)).